Here is a 335-residue protein sequence, read N- to C-terminus: Dihydroorotate dehydrogenase (quinone) (335 aa).

FMN contacts are provided by residues Ala58–Lys62 and Thr82. Lys62 is a substrate binding site. Asn107–Phe111 is a binding site for substrate. 2 residues coordinate FMN: Asn135 and Asn168. Residue Asn168 coordinates substrate. The active-site Nucleophile is Ser171. Asn173 provides a ligand contact to substrate. 2 residues coordinate FMN: Lys213 and Gly241. Asn242–Thr243 contributes to the substrate binding site. Residues Gly264, Gly293, and Tyr314–Ser315 contribute to the FMN site.

It belongs to the dihydroorotate dehydrogenase family. Type 2 subfamily. As to quaternary structure, monomer. FMN is required as a cofactor.

The protein localises to the cell membrane. It carries out the reaction (S)-dihydroorotate + a quinone = orotate + a quinol. The protein operates within pyrimidine metabolism; UMP biosynthesis via de novo pathway; orotate from (S)-dihydroorotate (quinone route): step 1/1. Functionally, catalyzes the conversion of dihydroorotate to orotate with quinone as electron acceptor. This Actinobacillus pleuropneumoniae serotype 7 (strain AP76) protein is Dihydroorotate dehydrogenase (quinone).